The primary structure comprises 258 residues: Acyl-[acyl-carrier-protein]--UDP-N-acetylglucosamine O-acyltransferase (258 aa).

It belongs to the transferase hexapeptide repeat family. LpxA subfamily. Homotrimer.

It is found in the cytoplasm. It catalyses the reaction a (3R)-hydroxyacyl-[ACP] + UDP-N-acetyl-alpha-D-glucosamine = a UDP-3-O-[(3R)-3-hydroxyacyl]-N-acetyl-alpha-D-glucosamine + holo-[ACP]. It functions in the pathway glycolipid biosynthesis; lipid IV(A) biosynthesis; lipid IV(A) from (3R)-3-hydroxytetradecanoyl-[acyl-carrier-protein] and UDP-N-acetyl-alpha-D-glucosamine: step 1/6. Its function is as follows. Involved in the biosynthesis of lipid A, a phosphorylated glycolipid that anchors the lipopolysaccharide to the outer membrane of the cell. In Pseudomonas syringae pv. tomato (strain ATCC BAA-871 / DC3000), this protein is Acyl-[acyl-carrier-protein]--UDP-N-acetylglucosamine O-acyltransferase.